The sequence spans 814 residues: Valine--tRNA ligase (814 aa).

The 'HIGH' region signature appears at 46–56; the sequence is PTVSGQLHIGH. Positions 536-540 match the 'KMSKS' region motif; sequence KMSKS. K539 is an ATP binding site.

Belongs to the class-I aminoacyl-tRNA synthetase family. ValS type 2 subfamily. In terms of assembly, monomer.

The protein localises to the cytoplasm. It catalyses the reaction tRNA(Val) + L-valine + ATP = L-valyl-tRNA(Val) + AMP + diphosphate. Its function is as follows. Catalyzes the attachment of valine to tRNA(Val). As ValRS can inadvertently accommodate and process structurally similar amino acids such as threonine, to avoid such errors, it has a 'posttransfer' editing activity that hydrolyzes mischarged Thr-tRNA(Val) in a tRNA-dependent manner. This chain is Valine--tRNA ligase, found in Rickettsia typhi (strain ATCC VR-144 / Wilmington).